The sequence spans 122 residues: Large ribosomal subunit protein uL18 (122 aa).

Over residues 1–11 (MLKKPDRNALR) the composition is skewed to basic and acidic residues. The segment at 1–22 (MLKKPDRNALRDKRRRRVRKKI) is disordered. Residues 12–22 (DKRRRRVRKKI) show a composition bias toward basic residues.

It belongs to the universal ribosomal protein uL18 family. In terms of assembly, part of the 50S ribosomal subunit; part of the 5S rRNA/L5/L18/L25 subcomplex. Contacts the 5S and 23S rRNAs.

Functionally, this is one of the proteins that bind and probably mediate the attachment of the 5S RNA into the large ribosomal subunit, where it forms part of the central protuberance. The protein is Large ribosomal subunit protein uL18 of Pelotomaculum thermopropionicum (strain DSM 13744 / JCM 10971 / SI).